Reading from the N-terminus, the 335-residue chain is Putative type I specificity subunit S.MpnORF89P (335 aa).

The protein belongs to the type-I restriction system S methylase family. In terms of assembly, the methyltransferase is composed of M and S polypeptides.

Functionally, the specificity (S) subunit of a type I methyltransferase (MTase); this subunit dictates DNA sequence specificity. The single R subunit has multiple frameshifts and is probably not expressed. The protein is Putative type I specificity subunit S.MpnORF89P of Mycoplasma pneumoniae (strain ATCC 29342 / M129 / Subtype 1) (Mycoplasmoides pneumoniae).